The following is a 590-amino-acid chain: MRKHPQSATKHLFVSGGVASSLGKGLTASSLGQLLTARGLHVTMQKLDPYLNVDPGTMNPFQHGEVFVTEDGAETDLDVGHYERFLDRDLSGSANVTTGQVYSTVIAKERRGEYLGDTVQVIPHITDEIKQRIMAMAQPDGGDNRPDVVITEIGGTVGDIESQPFLEAARQVRHDLGRENVFFLHVSLVPHLAPSGELKTKPTQHSVAALRSIGITPDALILRCDRDVPESLKNKIALMCDVDIDGVISTPDAPSIYDIPKVLHREELDAFVVRRLNLPFRDVDWTEWDDLLRRVHEPHGTVRIALVGKYVDFSDAYLSVSEALHAGGFKHYAKVEVVWVASDDCETATGAAAVLADVHGVLIPGGFGIRGIEGKIGAIRYARARGLPVLGLCLGLQCIVIEATRSVGLVQANSAEFEPATPDPVISTMADQKEIVAGEADFGGTMRLGAYPAVLQPASIVAQAYGTTQVSERHRHRYEVNNAYRDWIAESGLRISGTSPDGYLVEFVEYPANMHPFVVGTQAHPELKSRPTRPHPLFVAFVGAAIDYKSAELLPVEIPAVPEISEHLPNSSNQHRDGVERSFPAPAARG.

An amidoligase domain region spans residues 1–278 (MRKHPQSATK…DAFVVRRLNL (278 aa)). Position 20 (Ser20) interacts with CTP. Residue Ser20 coordinates UTP. ATP contacts are provided by residues 21–26 (SLGKGL) and Asp78. 2 residues coordinate Mg(2+): Asp78 and Glu152. Residues 159–161 (DIE), 199–204 (KTKPTQ), and Lys235 contribute to the CTP site. Residues 199–204 (KTKPTQ) and Lys235 contribute to the UTP site. The Glutamine amidotransferase type-1 domain occupies 303 to 551 (RIALVGKYVD…VGAAIDYKSA (249 aa)). Gly366 lines the L-glutamine pocket. The active-site Nucleophile; for glutamine hydrolysis is Cys393. L-glutamine-binding positions include 394–397 (LGLQ), Glu416, and Arg477. Residues His524 and Glu526 contribute to the active site. The segment at 566 to 590 (EHLPNSSNQHRDGVERSFPAPAARG) is disordered.

This sequence belongs to the CTP synthase family. Homotetramer.

The catalysed reaction is UTP + L-glutamine + ATP + H2O = CTP + L-glutamate + ADP + phosphate + 2 H(+). It carries out the reaction L-glutamine + H2O = L-glutamate + NH4(+). It catalyses the reaction UTP + NH4(+) + ATP = CTP + ADP + phosphate + 2 H(+). It functions in the pathway pyrimidine metabolism; CTP biosynthesis via de novo pathway; CTP from UDP: step 2/2. Its activity is regulated as follows. Allosterically activated by GTP, when glutamine is the substrate; GTP has no effect on the reaction when ammonia is the substrate. The allosteric effector GTP functions by stabilizing the protein conformation that binds the tetrahedral intermediate(s) formed during glutamine hydrolysis. Inhibited by the product CTP, via allosteric rather than competitive inhibition. Catalyzes the ATP-dependent amination of UTP to CTP with either L-glutamine or ammonia as the source of nitrogen. Regulates intracellular CTP levels through interactions with the four ribonucleotide triphosphates. The chain is CTP synthase from Mycobacterium leprae (strain Br4923).